The primary structure comprises 380 residues: Cytochrome b (380 aa).

A run of 4 helical transmembrane segments spans residues 33-53, 77-98, 113-133, and 178-198; these read FGSL…FLAM, WLIR…YFHI, WNIG…GYVL, and FFAF…LHLL. Heme b contacts are provided by H83 and H97. Heme b is bound by residues H182 and H196. H201 is an a ubiquinone binding site. A run of 4 helical transmembrane segments spans residues 226-246, 288-308, 320-340, and 347-367; these read YKDL…ALFS, LGGV…PFLH, VSQF…WIGG, and FIII…VFFP.

It belongs to the cytochrome b family. In terms of assembly, the cytochrome bc1 complex contains 3 respiratory subunits (MT-CYB, CYC1 and UQCRFS1), 2 core proteins (UQCRC1 and UQCRC2) and probably 6 low-molecular weight proteins. The cofactor is heme b.

It localises to the mitochondrion inner membrane. Functionally, component of the ubiquinol-cytochrome c reductase complex (complex III or cytochrome b-c1 complex) that is part of the mitochondrial respiratory chain. The b-c1 complex mediates electron transfer from ubiquinol to cytochrome c. Contributes to the generation of a proton gradient across the mitochondrial membrane that is then used for ATP synthesis. The polypeptide is Cytochrome b (mt-cyb) (Sarda sarda (Atlantic bonito)).